The chain runs to 357 residues: Aspartate carbamoyltransferase catalytic subunit (357 aa).

Polar residues predominate over residues 1 to 15 (MSNSIDSQSLPTVSP). The segment at 1–21 (MSNSIDSQSLPTVSPTDYARF) is disordered. Residues R97 and T98 each contribute to the carbamoyl phosphate site. An L-aspartate-binding site is contributed by K125. Residues R147, H177, and Q180 each coordinate carbamoyl phosphate. The L-aspartate site is built by R211 and R266. Positions 307 and 308 each coordinate carbamoyl phosphate.

It belongs to the aspartate/ornithine carbamoyltransferase superfamily. ATCase family. In terms of assembly, heterododecamer (2C3:3R2) of six catalytic PyrB chains organized as two trimers (C3), and six regulatory PyrI chains organized as three dimers (R2).

It catalyses the reaction carbamoyl phosphate + L-aspartate = N-carbamoyl-L-aspartate + phosphate + H(+). It functions in the pathway pyrimidine metabolism; UMP biosynthesis via de novo pathway; (S)-dihydroorotate from bicarbonate: step 2/3. Functionally, catalyzes the condensation of carbamoyl phosphate and aspartate to form carbamoyl aspartate and inorganic phosphate, the committed step in the de novo pyrimidine nucleotide biosynthesis pathway. In Psychrobacter cryohalolentis (strain ATCC BAA-1226 / DSM 17306 / VKM B-2378 / K5), this protein is Aspartate carbamoyltransferase catalytic subunit.